A 197-amino-acid polypeptide reads, in one-letter code: Scoloptoxin SSD20 (197 aa).

The first 6 residues, 1–6 (PPMTTE), serve as a signal peptide directing secretion.

As to expression, expressed by the venom gland.

The protein localises to the secreted. In terms of biological role, may act as a voltage-gated potassium channel inhibitor. Is highly similar to the subunit beta of SSD14 which, when complexed with subunit alpha, induces platelet aggregation and hemolysis. The polypeptide is Scoloptoxin SSD20 (Scolopendra dehaani (Thai centipede)).